Here is a 446-residue protein sequence, read N- to C-terminus: Tubulin beta-2 chain (446 aa).

GTP contacts are provided by Gln11, Glu69, Ser138, Gly142, Thr143, Gly144, Asn204, and Asn226. Position 69 (Glu69) interacts with Mg(2+). Residues 426–446 (QEAGIDEEEEYEEEAPAEHEE) form a disordered region. The segment covering 429 to 440 (GIDEEEEYEEEA) has biased composition (acidic residues).

This sequence belongs to the tubulin family. Dimer of alpha and beta chains. A typical microtubule is a hollow water-filled tube with an outer diameter of 25 nm and an inner diameter of 15 nM. Alpha-beta heterodimers associate head-to-tail to form protofilaments running lengthwise along the microtubule wall with the beta-tubulin subunit facing the microtubule plus end conferring a structural polarity. Microtubules usually have 13 protofilaments but different protofilament numbers can be found in some organisms and specialized cells. Mg(2+) serves as cofactor.

The protein resides in the cytoplasm. Its subcellular location is the cytoskeleton. Its function is as follows. Tubulin is the major constituent of microtubules, a cylinder consisting of laterally associated linear protofilaments composed of alpha- and beta-tubulin heterodimers. Microtubules grow by the addition of GTP-tubulin dimers to the microtubule end, where a stabilizing cap forms. Below the cap, tubulin dimers are in GDP-bound state, owing to GTPase activity of alpha-tubulin. This Hypocrea virens (Gliocladium virens) protein is Tubulin beta-2 chain.